The sequence spans 358 residues: Vanillin synthase (358 aa).

An N-terminal signal peptide occupies residues 1–21; the sequence is MARLLLLLVGVLIACAAGARA. A propeptide spans 22 to 140 (activation peptide); sequence GSEFLAEDNP…RGNHKLTSAI (119 aa). N-linked (GlcNAc...) asparagine glycosylation is present at asparagine 125. Cystine bridges form between cysteine 162-cysteine 205 and cysteine 196-cysteine 238. Cysteine 165 is a catalytic residue. Asparagine 254 is a glycosylation site (N-linked (GlcNAc...) asparagine). A disulfide bridge connects residues cysteine 296 and cysteine 346. Active-site residues include histidine 305 and asparagine 325.

It belongs to the peptidase C1 family.

It carries out the reaction (E)-ferulate + H2O = vanillin + acetate. The enzyme catalyses 4-O-beta-D-glucosyl-trans-ferulate + H2O = 4-O-beta-D-glucosyl-vanillin + acetate. It functions in the pathway aromatic compound metabolism; phenylpropanoid biosynthesis. Involved in the biosynthesis of vanillin and derivative natural products. Catalyzes the double carbon bond cleavage of ferulic acid to vanillin and of respective glucosides. The sequence is that of Vanillin synthase from Glechoma hederacea (Ground-ivy).